A 301-amino-acid polypeptide reads, in one-letter code: Probable alpha-L-glutamate ligase 1 (301 aa).

Positions 104–287 (LQLLSRKGIG…VTEPIVEYIE (184 aa)) constitute an ATP-grasp domain. ATP-binding positions include Lys141, 178 to 179 (EY), Asp187, and 211 to 213 (RSN). Mg(2+) contacts are provided by Asp248, Glu260, and Asn262. The Mn(2+) site is built by Asp248, Glu260, and Asn262.

This sequence belongs to the RimK family. Mg(2+) serves as cofactor. Mn(2+) is required as a cofactor.

This Shewanella baltica (strain OS155 / ATCC BAA-1091) protein is Probable alpha-L-glutamate ligase 1.